We begin with the raw amino-acid sequence, 252 residues long: Uridylate kinase (252 aa).

24–27 (KLSG) lines the ATP pocket. The involved in allosteric activation by GTP stretch occupies residues 32-37 (GEEGFG). Residue glycine 66 coordinates UMP. ATP-binding residues include glycine 67 and arginine 71. Residues aspartate 86 and 147–154 (TGNPFFTT) contribute to the UMP site. 3 residues coordinate ATP: threonine 174, tyrosine 180, and aspartate 183.

Belongs to the UMP kinase family. In terms of assembly, homohexamer.

It localises to the cytoplasm. It catalyses the reaction UMP + ATP = UDP + ADP. Its pathway is pyrimidine metabolism; CTP biosynthesis via de novo pathway; UDP from UMP (UMPK route): step 1/1. Allosterically activated by GTP. Inhibited by UTP. Catalyzes the reversible phosphorylation of UMP to UDP. This Alcanivorax borkumensis (strain ATCC 700651 / DSM 11573 / NCIMB 13689 / SK2) protein is Uridylate kinase.